Consider the following 610-residue polypeptide: UvrABC system protein C (610 aa).

A GIY-YIG domain is found at 16 to 94; it reads SQPGVYRMYD…IKLYQPRYNV (79 aa). In terms of domain architecture, UVR spans 204–239; the sequence is DQVLTQLIARMEKASQDLAFEEAARIRDQIQAVRRV.

Belongs to the UvrC family. As to quaternary structure, interacts with UvrB in an incision complex.

The protein resides in the cytoplasm. Its function is as follows. The UvrABC repair system catalyzes the recognition and processing of DNA lesions. UvrC both incises the 5' and 3' sides of the lesion. The N-terminal half is responsible for the 3' incision and the C-terminal half is responsible for the 5' incision. This chain is UvrABC system protein C, found in Salmonella gallinarum (strain 287/91 / NCTC 13346).